Reading from the N-terminus, the 371-residue chain is Nicotinate-nucleotide pyrophosphorylase [carboxylating], chloroplastic (371 aa).

A chloroplast-targeting transit peptide spans 1-48 (MPAAAAAAAPPNPNVLQLAPRLRGLVSFPSSYSSSSPFSNRLRLRLPR). Residues Arg162, 193–195 (TRK), Arg217, Lys227, Glu260, Asp287, 319–321 (SGN), and 340–342 (SGA) contribute to the substrate site.

The protein belongs to the NadC/ModD family.

The protein resides in the plastid. The protein localises to the chloroplast. It catalyses the reaction nicotinate beta-D-ribonucleotide + CO2 + diphosphate = quinolinate + 5-phospho-alpha-D-ribose 1-diphosphate + 2 H(+). The protein operates within cofactor biosynthesis; NAD(+) biosynthesis; nicotinate D-ribonucleotide from quinolinate: step 1/1. Its function is as follows. Involved in the catabolism of quinolinic acid (QA). The polypeptide is Nicotinate-nucleotide pyrophosphorylase [carboxylating], chloroplastic (Oryza sativa subsp. japonica (Rice)).